A 60-amino-acid chain; its full sequence is Large ribosomal subunit protein uL30 (60 aa).

This sequence belongs to the universal ribosomal protein uL30 family. In terms of assembly, part of the 50S ribosomal subunit.

The polypeptide is Large ribosomal subunit protein uL30 (Sphingopyxis alaskensis (strain DSM 13593 / LMG 18877 / RB2256) (Sphingomonas alaskensis)).